The sequence spans 441 residues: MSNVMQQPKIGFVSLGCPKNLVDSERILTELRTEGYDVVPRYDDADMVIVNTCGFIDSAVQESLEAIGEALNENGKVIVTGCLGAKEDQIREVHPKVLEITGPHSYEQVLQHVHHYVPKPKHNPFLSLVPEQGVKLTPRHYAYLKISEGCNHRCTFCIIPSMRGDLDSRPIGDVLAEAKRLVEAGVKELLVISQDTSAYGVDVKHRTGFWNGSPVKTSMVSLCEQLAKLGVWVRLHYVYPYPHVDDVIPLMAEGKILPYLDIPLQHASPRILKLMKRPGSVDRQLARIKQWREICPELTLRSTFIVGFPGETEDDFQMLLDFLKEARLDRVGCFKYSPVEGATANDLPDQVPEEVKEERWNRFMALQQQISAERLQEKVGREILVIIDEVDEEGAIGRSMADAPEIDGAVYLNGETKLKPGDVVRVKVENADEYDLWGSLV.

Residues 8–118 (PKIGFVSLGC…VLQHVHHYVP (111 aa)) form the MTTase N-terminal domain. Cys17, Cys53, Cys82, Cys150, Cys154, and Cys157 together coordinate [4Fe-4S] cluster. The Radical SAM core domain occupies 136–373 (LTPRHYAYLK…MALQQQISAE (238 aa)). One can recognise a TRAM domain in the interval 376–441 (QEKVGREILV…DEYDLWGSLV (66 aa)).

The protein belongs to the methylthiotransferase family. RimO subfamily. It depends on [4Fe-4S] cluster as a cofactor.

Its subcellular location is the cytoplasm. The enzyme catalyses L-aspartate(89)-[ribosomal protein uS12]-hydrogen + (sulfur carrier)-SH + AH2 + 2 S-adenosyl-L-methionine = 3-methylsulfanyl-L-aspartate(89)-[ribosomal protein uS12]-hydrogen + (sulfur carrier)-H + 5'-deoxyadenosine + L-methionine + A + S-adenosyl-L-homocysteine + 2 H(+). In terms of biological role, catalyzes the methylthiolation of an aspartic acid residue of ribosomal protein uS12. This Cronobacter sakazakii (strain ATCC BAA-894) (Enterobacter sakazakii) protein is Ribosomal protein uS12 methylthiotransferase RimO.